The chain runs to 227 residues: PKHD-type hydroxylase Bxeno_B2194 (227 aa).

In terms of domain architecture, Fe2OG dioxygenase spans 78–178; the sequence is KVFPPLFNRY…RVASFFWIQS (101 aa). Fe cation contacts are provided by His96, Asp98, and His159. Residue Arg169 coordinates 2-oxoglutarate.

It depends on Fe(2+) as a cofactor. The cofactor is L-ascorbate.

In Paraburkholderia xenovorans (strain LB400), this protein is PKHD-type hydroxylase Bxeno_B2194.